The following is a 203-amino-acid chain: Superoxide dismutase [Mn] (203 aa).

The Mn(2+) site is built by His-27, His-81, Asp-167, and His-171.

Belongs to the iron/manganese superoxide dismutase family. Homodimer. It depends on Mn(2+) as a cofactor.

The catalysed reaction is 2 superoxide + 2 H(+) = H2O2 + O2. Functionally, destroys superoxide anion radicals which are normally produced within the cells and which are toxic to biological systems. The chain is Superoxide dismutase [Mn] (sodA) from Buchnera aphidicola subsp. Acyrthosiphon pisum (strain APS) (Acyrthosiphon pisum symbiotic bacterium).